Reading from the N-terminus, the 205-residue chain is 3-demethoxyubiquinol 3-hydroxylase (205 aa).

Residues Glu54, Glu84, His87, Glu136, Glu168, and His171 each coordinate Fe cation.

The protein belongs to the COQ7 family. It depends on Fe cation as a cofactor.

The protein localises to the cell membrane. The catalysed reaction is a 5-methoxy-2-methyl-3-(all-trans-polyprenyl)benzene-1,4-diol + AH2 + O2 = a 3-demethylubiquinol + A + H2O. It functions in the pathway cofactor biosynthesis; ubiquinone biosynthesis. Catalyzes the hydroxylation of 2-nonaprenyl-3-methyl-6-methoxy-1,4-benzoquinol during ubiquinone biosynthesis. The sequence is that of 3-demethoxyubiquinol 3-hydroxylase from Paracidovorax citrulli (strain AAC00-1) (Acidovorax citrulli).